A 369-amino-acid polypeptide reads, in one-letter code: Type 2 DNA topoisomerase 6 subunit A (369 aa).

A Topo IIA-type catalytic domain is found at 11–149; that stretch reads KGDALAREKL…FHMRPEEDGA (139 aa). The O-(5'-phospho-DNA)-tyrosine intermediate role is filled by Y106. Residues E202 and D254 each contribute to the Mg(2+) site.

This sequence belongs to the TOP6A family. Homodimer. Heterotetramer of two Top6A and two Top6B chains. The cofactor is Mg(2+).

It catalyses the reaction ATP-dependent breakage, passage and rejoining of double-stranded DNA.. Its function is as follows. Relaxes both positive and negative superturns and exhibits a strong decatenase activity. The chain is Type 2 DNA topoisomerase 6 subunit A from Methanosarcina mazei (strain ATCC BAA-159 / DSM 3647 / Goe1 / Go1 / JCM 11833 / OCM 88) (Methanosarcina frisia).